The chain runs to 852 residues: Polyphosphate kinase (852 aa).

Disordered stretches follow at residues 1–36 (MATG…DRPI) and 58–82 (SHDP…SRRK). A compositionally biased stretch (basic and acidic residues) spans 20 to 36 (VARDHPGCGPHRLDRPI). Residues 58 to 67 (SHDPAPSQSV) show a composition bias toward polar residues. Asn-131 is an ATP binding site. The segment at 251-303 (GDEIGPQRTPPPSDSLDNRVPSNLKRNSDTANQQPTPAENISAPEDGAEQTEP) is disordered. The insert stretch occupies residues 258–303 (RTPPPSDSLDNRVPSNLKRNSDTANQQPTPAENISAPEDGAEQTEP). Residues 270 to 289 (VPSNLKRNSDTANQQPTPAE) show a composition bias toward polar residues. Residues Arg-524 and Arg-554 each coordinate Mg(2+). The Phosphohistidine intermediate role is filled by His-584. The ATP site is built by Tyr-617, Arg-713, and His-741.

Belongs to the polyphosphate kinase 1 (PPK1) family. It depends on Mg(2+) as a cofactor. In terms of processing, an intermediate of this reaction is the autophosphorylated ppk in which a phosphate is covalently linked to a histidine residue through a N-P bond.

It carries out the reaction [phosphate](n) + ATP = [phosphate](n+1) + ADP. Functionally, catalyzes the reversible transfer of the terminal phosphate of ATP to form a long-chain polyphosphate (polyP). The sequence is that of Polyphosphate kinase from Rhodopirellula baltica (strain DSM 10527 / NCIMB 13988 / SH1).